Consider the following 387-residue polypeptide: Polyphosphate kinase (387 aa).

Mg(2+) is bound by residues Arg-347 and Arg-377.

The protein belongs to the polyphosphate kinase 1 (PPK1) family. Mg(2+) serves as cofactor. An intermediate of this reaction is the autophosphorylated ppk in which a phosphate is covalently linked to a histidine residue through a N-P bond.

It catalyses the reaction [phosphate](n) + ATP = [phosphate](n+1) + ADP. Functionally, catalyzes the reversible transfer of the terminal phosphate of ATP to form a long-chain polyphosphate (polyP). This Aphanizomenon baltica protein is Polyphosphate kinase (ppk).